The chain runs to 209 residues: Probable glutathione peroxidase 8 (209 aa).

N-acetylmethionine is present on Met-1. Residues 18–40 (IFAVLLSMVLCTVMLFLLQLKFL) traverse the membrane as a helical segment. Residue Cys-79 is part of the active site.

The protein belongs to the glutathione peroxidase family.

Its subcellular location is the membrane. It catalyses the reaction 2 glutathione + H2O2 = glutathione disulfide + 2 H2O. The sequence is that of Probable glutathione peroxidase 8 (Gpx8) from Mus musculus (Mouse).